Here is a 417-residue protein sequence, read N- to C-terminus: NADH-quinone oxidoreductase subunit D (417 aa).

This sequence belongs to the complex I 49 kDa subunit family. As to quaternary structure, NDH-1 is composed of 14 different subunits. Subunits NuoB, C, D, E, F, and G constitute the peripheral sector of the complex.

It is found in the cell inner membrane. It carries out the reaction a quinone + NADH + 5 H(+)(in) = a quinol + NAD(+) + 4 H(+)(out). NDH-1 shuttles electrons from NADH, via FMN and iron-sulfur (Fe-S) centers, to quinones in the respiratory chain. The immediate electron acceptor for the enzyme in this species is believed to be ubiquinone. Couples the redox reaction to proton translocation (for every two electrons transferred, four hydrogen ions are translocated across the cytoplasmic membrane), and thus conserves the redox energy in a proton gradient. The polypeptide is NADH-quinone oxidoreductase subunit D (Hydrogenovibrio crunogenus (strain DSM 25203 / XCL-2) (Thiomicrospira crunogena)).